Reading from the N-terminus, the 313-residue chain is Ribosomal RNA small subunit methyltransferase H (313 aa).

S-adenosyl-L-methionine contacts are provided by residues G35–H37, D55, F79, D100, and Q107.

This sequence belongs to the methyltransferase superfamily. RsmH family.

It localises to the cytoplasm. It catalyses the reaction cytidine(1402) in 16S rRNA + S-adenosyl-L-methionine = N(4)-methylcytidine(1402) in 16S rRNA + S-adenosyl-L-homocysteine + H(+). Specifically methylates the N4 position of cytidine in position 1402 (C1402) of 16S rRNA. The sequence is that of Ribosomal RNA small subunit methyltransferase H from Burkholderia thailandensis (strain ATCC 700388 / DSM 13276 / CCUG 48851 / CIP 106301 / E264).